The chain runs to 489 residues: Probable guanine deaminase (489 aa).

2 residues coordinate Zn(2+): histidine 100 and histidine 102. Substrate is bound by residues 102-105 (HVSQ), 231-232 (RF), 258-261 (HLSE), and aspartate 348. Positions 258 and 348 each coordinate Zn(2+).

The protein belongs to the metallo-dependent hydrolases superfamily. ATZ/TRZ family. Requires Zn(2+) as cofactor.

It localises to the cytoplasm. The catalysed reaction is guanine + H2O + H(+) = xanthine + NH4(+). It functions in the pathway purine metabolism; guanine degradation; xanthine from guanine: step 1/1. In terms of biological role, catalyzes the hydrolytic deamination of guanine, producing xanthine and ammonia. The protein is Probable guanine deaminase (GUD1) of Saccharomyces cerevisiae (strain ATCC 204508 / S288c) (Baker's yeast).